The primary structure comprises 470 residues: MTPFMTEDFLLDTEFARRLYHDYAKDQPIFDYHCHLPPQQIAEDYRFKNLYDIWLKGDHYKWRAMRTNGVAERLCTGDASDREKFDAWAATVPHTIGNPLYHWTHLELRRPFGITGKLLSPSTADEIWNECNELLAQDNFSARGIMQQMNVKMVGTTDDPIDSLEHHAEIAKDGSFTIKVLPSWRPDKAFNIEQATFNDYMAKLGEVSDTDIRRFADLQTGLTKRLDHFAAHGCKVSDHALDVVMFAEANEAELDSILARRLAGETLSEHEVAQFKTAVLVFLGAEYARRGWVQQYHIGALRNNNLRQFKLLGPDVGFDSINDRPMAEELSKLLSKQNEENLLPKTILYCLNPRDNEVLGTMIGNFQGEGMPGKMQFGSGWWFNDQKDGMERQMTQLAQLGLLSRFVGMLTDSRSFLSYTRHEYFRRILCQMIGRWVEAGEAPADINLLGEMVKNICFNNARDYFAIELN.

The protein belongs to the metallo-dependent hydrolases superfamily. Uronate isomerase family.

The enzyme catalyses D-glucuronate = D-fructuronate. It carries out the reaction aldehydo-D-galacturonate = keto-D-tagaturonate. It functions in the pathway carbohydrate metabolism; pentose and glucuronate interconversion. The polypeptide is Uronate isomerase (Shigella boydii serotype 18 (strain CDC 3083-94 / BS512)).